Reading from the N-terminus, the 445-residue chain is MSRKYFGTDGVRGEVGKFPITPEFVMKLGYAAGRVLVNHDQDSRPTVLIGKDTRISGYMLEAALQAGFTAAGVNVLLTGPLPTPGIAYLTRALRLEAGVVISASHNPFQDNGIKFFAEGGNKLDDALELEIEAMLDQPMATNPSLELGRARRIDGAAERYIEFCKSTFPNELSLKGLKLVVDCANGATYHIAPKVFHELGAELVEIGCEPNGYNINDKVGATYPKTLQMAVLEHQADFGIALDGDGDRLIMVDAAGRVYDGDQLIYVIAKARAARGELKGGVVGTVMTNMAMELALQKQGVPFGRAKVGDRYVLEMLHADGWQVGGEASGHILCLDKHSTGDGIISSLQVLASLKQLGLSLAEICADWRPFPQTLINVRHNGCDWKAASAAPLAEAEAALQGRGRVVLRPSGTEPVVRVMVEADDKALADTWAKAIAAAIEKVSA.

Catalysis depends on Ser104, which acts as the Phosphoserine intermediate. Mg(2+) contacts are provided by Ser104, Asp243, Asp245, and Asp247. Ser104 is modified (phosphoserine).

The protein belongs to the phosphohexose mutase family. It depends on Mg(2+) as a cofactor. In terms of processing, activated by phosphorylation.

The enzyme catalyses alpha-D-glucosamine 1-phosphate = D-glucosamine 6-phosphate. In terms of biological role, catalyzes the conversion of glucosamine-6-phosphate to glucosamine-1-phosphate. This is Phosphoglucosamine mutase from Chromobacterium violaceum (strain ATCC 12472 / DSM 30191 / JCM 1249 / CCUG 213 / NBRC 12614 / NCIMB 9131 / NCTC 9757 / MK).